The sequence spans 43 residues: Protein PsbN (43 aa).

A helical membrane pass occupies residues 7-27; sequence VTIFISGLLVSFTGYALYIAF.

The protein belongs to the PsbN family.

It is found in the plastid. It localises to the chloroplast thylakoid membrane. May play a role in photosystem I and II biogenesis. In Dioscorea bulbifera (Air potato), this protein is Protein PsbN.